The sequence spans 438 residues: C4-dicarboxylate transport protein 1 (438 aa).

The next 8 membrane-spanning stretches (helical) occupy residues 20–42, 57–77, 90–112, 160–179, 192–214, 229–251, 324–346, and 361–383; these read LYVQVLIAILIGAMVGCLWPSVA, LIKMVIAPIIFCTVTSGIAHI, ALFYFEIVSSFALLLGLAMGNLV, VLQVLLFAILFGFSLMALGK, AHAVFGVIAIVMKAAPIGAFGAM, LIGLIALFYVTAALFVVVVLGLI, LFIAQALGVDLSFGQQLTILLVA, and FITLAATLSVVNPALVPGMAIVF.

The protein belongs to the dicarboxylate/amino acid:cation symporter (DAACS) (TC 2.A.23) family.

It localises to the cell inner membrane. Its function is as follows. Responsible for the transport of dicarboxylates such as succinate, fumarate, and malate from the periplasm across the membrane. The protein is C4-dicarboxylate transport protein 1 of Bradyrhizobium diazoefficiens (strain JCM 10833 / BCRC 13528 / IAM 13628 / NBRC 14792 / USDA 110).